The chain runs to 285 residues: Cytochrome c1 (285 aa).

The first 22 residues, Met1–Ala22, serve as a signal peptide directing secretion. Residues Cys58, Cys61, His62, and Met207 each coordinate heme c. The chain crosses the membrane as a helical span at residues Ala251–Thr269.

The main subunits of complex b-c1 are: cytochrome b, cytochrome c1 and the Rieske protein. Binds 1 heme c group covalently per subunit.

The protein localises to the cell membrane. Component of the ubiquinol-cytochrome c reductase complex (complex III or cytochrome b-c1 complex), which is a respiratory chain that generates an electrochemical potential coupled to ATP synthesis. c1 functions as an electron donor to cytochrome c. The polypeptide is Cytochrome c1 (petC) (Cereibacter sphaeroides (Rhodobacter sphaeroides)).